Reading from the N-terminus, the 339-residue chain is UDP-glucose 4-epimerase (339 aa).

NAD(+)-binding positions include 12 to 13 (FI), 32 to 37 (DNLCNS), 59 to 60 (DI), 81 to 85 (FAGLK), Asn-100, Ser-125, Tyr-150, Lys-154, and Phe-179. Residues Ser-125 and Tyr-150 each coordinate substrate. The active-site Proton acceptor is the Tyr-150. Residues Asn-180, 200–201 (NL), 217–219 (AVF), Arg-232, and 293–296 (RAGD) contribute to the substrate site.

It belongs to the NAD(P)-dependent epimerase/dehydratase family. As to quaternary structure, homodimer. Requires NAD(+) as cofactor.

It catalyses the reaction UDP-alpha-D-glucose = UDP-alpha-D-galactose. The protein operates within carbohydrate metabolism; galactose metabolism. Involved in the metabolism of galactose. Plays an essential role in the incorporation of galactose into meningococcal lipopolysaccharide surface molecules, which are important for pathogenesis. Catalyzes the conversion of UDP-galactose (UDP-Gal) to UDP-glucose (UDP-Glc) through a mechanism involving the transient reduction of NAD. The chain is UDP-glucose 4-epimerase (galE) from Neisseria meningitidis serogroup B (strain ATCC BAA-335 / MC58).